The following is a 120-amino-acid chain: uncharacterized protein (120 aa).

2 consecutive transmembrane segments (helical) span residues 8 to 28 (PFVT…CTLV) and 55 to 75 (FLEN…IGIL).

Its subcellular location is the membrane. This is an uncharacterized protein from Saccharomyces cerevisiae (strain ATCC 204508 / S288c) (Baker's yeast).